Here is a 67-residue protein sequence, read N- to C-terminus: Large ribosomal subunit protein bL35 (67 aa).

It belongs to the bacterial ribosomal protein bL35 family.

This chain is Large ribosomal subunit protein bL35, found in Gloeothece citriformis (strain PCC 7424) (Cyanothece sp. (strain PCC 7424)).